We begin with the raw amino-acid sequence, 287 residues long: Nucleotide-binding protein Ajs_0902 (287 aa).

Residue glycine 10–serine 17 participates in ATP binding. Aspartate 59–serine 62 serves as a coordination point for GTP.

Belongs to the RapZ-like family.

Functionally, displays ATPase and GTPase activities. This Acidovorax sp. (strain JS42) protein is Nucleotide-binding protein Ajs_0902.